The chain runs to 177 residues: Peptide methionine sulfoxide reductase MsrA (177 aa).

The active site involves cysteine 11.

It belongs to the MsrA Met sulfoxide reductase family.

It carries out the reaction L-methionyl-[protein] + [thioredoxin]-disulfide + H2O = L-methionyl-(S)-S-oxide-[protein] + [thioredoxin]-dithiol. The catalysed reaction is [thioredoxin]-disulfide + L-methionine + H2O = L-methionine (S)-S-oxide + [thioredoxin]-dithiol. Has an important function as a repair enzyme for proteins that have been inactivated by oxidation. Catalyzes the reversible oxidation-reduction of methionine sulfoxide in proteins to methionine. The chain is Peptide methionine sulfoxide reductase MsrA from Picrophilus torridus (strain ATCC 700027 / DSM 9790 / JCM 10055 / NBRC 100828 / KAW 2/3).